Reading from the N-terminus, the 468-residue chain is Mothers against decapentaplegic homolog 1 (468 aa).

At methionine 1 the chain carries N-acetylmethionine. Residues 12–136 (PAVKRLLGWK…YKRVESPVLP (125 aa)) form the MH1 domain. The Zn(2+) site is built by cysteine 64, cysteine 109, cysteine 121, and histidine 126. The disordered stretch occupies residues 162–246 (NEPHMPLNAT…DGSQPMDTNM (85 aa)). The span at 188–210 (PNSSYPNSPGSSSSTYPHSPTSS) shows a compositional bias: low complexity. Residues 221-232 (DTPPPAYLPPED) show a composition bias toward pro residues. A compositionally biased stretch (polar residues) spans 237 to 246 (DGSQPMDTNM). Positions 274–468 (WCSIVYYELN…SPHNPISSVS (195 aa)) constitute an MH2 domain. Threonine 325 carries the post-translational modification Phosphothreonine; by MINK1, TNIK and MAP4K4. Residues 421-431 (KGWGAEYHRQD) are L3 loop. A phosphoserine mark is found at serine 466 and serine 468.

This sequence belongs to the dwarfin/SMAD family. As to quaternary structure, found in a complex with SMAD4 and YY1. Interacts with HGS, NANOG and ZCCHC12. Upon C-terminus phosphorylation: forms trimers with another SMAD1 and the co-SMAD SMAD4. Interacts with PEBP2-alpha subunit, CREB-binding protein (CBP), p300, SMURF1, SMURF2, USP15 and HOXC8. Associates with ZNF423 or ZNF521 in response to BMP2 leading to activate transcription of BMP target genes. Interacts with SKOR1. Interacts (via MH2 domain) with LEMD3. Binding to LEMD3 results in at least a partial reduction of receptor-mediated phosphorylation. Forms a ternary complex with PSMB4 and OAZ1 before PSMB4 is incorporated into the 20S proteasome. Interacts (via MH2 domain) with FAM83G (via MH2 domain); in a SMAD4-independent manner. Interacts with ZC3H3. Interacts with TMEM119. Interacts (via MH1 and MH2 domains) with ZNF8. Interacts with RANBP3L; the interaction increases when SMAD1 is not phosphorylated and mediates SMAD1 nuclear export. Interacts with EGR1; this interaction inhibits SMAD1 dephosphorylation. Interacts with SMAD6. Interacts with YAP1. Interacts with MTMR4; negatively regulates BMP signaling through SMAD1 dephosphorylation and retention in endosomes. Post-translationally, phosphorylation of the C-terminal SVS motif by BMP type 1 receptor kinase activates SMAD1 by promoting dissociation from the receptor and trimerization with SMAD4. Phosphorylation by ERK2 MAP kinase in response to EGF or HGF prevents SMAD1 nuclear accumulation and transcriptional activity in response to BMP. Dephosphorylation, probably by PPM1A, induces its export from the nucleus to the cytoplasm. Dephosphorylation is inhibited by association with EGR1. Phosphorylation by CDK8/9 creates binding sites for YAP1, and subsequent phosphorylation by GSK3 switches off YAP1 binding and adds binding sites for SMURF1. In terms of processing, ubiquitinated by SMAD-specific E3 ubiquitin ligase SMURF1, leading to its degradation. Monoubiquitinated, leading to prevent DNA-binding. Deubiquitination by USP15 alleviates inhibition and promotes activation of TGF-beta target genes. Dephosphorylation, probably by PPM1A, induces its export from the nucleus to the cytoplasm. Phospho-SMAD1 is ubiquitinated by CHIP leading to disruption of the SMAD1-SMAD4 complex. In terms of tissue distribution, ubiquitous; present in liver, lung, stomach and spleen with lower level in heart, testes and skeletal muscle.

The protein resides in the cytoplasm. The protein localises to the nucleus. Functionally, transcriptional modulator that plays a role in various cellular processes, including embryonic development, cell differentiation, and tissue homeostasis. Upon BMP ligand binding to their receptors at the cell surface, is phosphorylated by activated type I BMP receptors (BMPRIs) and associates with SMAD4 to form an heteromeric complex which translocates into the nucleus acting as transcription factor. In turn, the hetero-trimeric complex recognizes cis-regulatory elements containing Smad Binding Elements (SBEs) to modulate the outcome of the signaling network. SMAD1/OAZ1/PSMB4 complex mediates the degradation of the CREBBP/EP300 repressor SNIP1. Positively regulates BMP4-induced expression of odontogenic development regulator MSX1 following IPO7-mediated nuclear import. This chain is Mothers against decapentaplegic homolog 1 (Smad1), found in Rattus norvegicus (Rat).